The sequence spans 463 residues: MADYIVKDIKLAEFGRKELDIAETEMPGLMACREEFGPSQPLKGARIAGSLHMTIQTAVLIETLKALGADVRWASCNIFSTQDHAAAAIAAGGTPVFAVKGETLEEYWAYTDKIFQFPEGTCNMILDDGGDATLYILLGARVEAGETDLIATPTSEEEVCLFNQIKKRMVESPGWFTQQRAAIKGVSEETTTGVHRLYDLHKKGLLPFPAINVNDSVTKSKFDNKYGCKESLVDGIRRATDVMMAGKVAVVCGYGDVGKGSAASLRGAGARVKVTEVDPICALQAAMDGFEVVVLEDVVADADIFITTTGNKDVIRIEHMREMKDMAIVGNIGHFDNEIQVAALKNHKWTNIKDQVDMIEMPSGARIILLSEGRLLNLGNATGHPSFVMSASFTNQVLAQIELWTKGAEYQPGVYILPKSLDEKVARLHLKKIGVKLTTLRPDQAEYIGVTVEGPFKSDHYRY.

Substrate contacts are provided by T54, D128, and E189. 190-192 serves as a coordination point for NAD(+); that stretch reads TTT. Residues K219 and D223 each contribute to the substrate site. Residues N224, 253-258, E276, N311, 332-334, and N377 contribute to the NAD(+) site; these read GYGDVG and IGH.

Belongs to the adenosylhomocysteinase family. Homotetramer. NAD(+) is required as a cofactor.

It localises to the cytoplasm. It carries out the reaction S-adenosyl-L-homocysteine + H2O = L-homocysteine + adenosine. Its pathway is amino-acid biosynthesis; L-homocysteine biosynthesis; L-homocysteine from S-adenosyl-L-homocysteine: step 1/1. Its function is as follows. May play a key role in the regulation of the intracellular concentration of adenosylhomocysteine. The sequence is that of Adenosylhomocysteinase from Rhodobacter capsulatus (strain ATCC BAA-309 / NBRC 16581 / SB1003).